A 602-amino-acid chain; its full sequence is Elongation factor 4 (602 aa).

Residues arginine 7–threonine 189 form the tr-type G domain. GTP-binding positions include aspartate 19–threonine 24 and asparagine 136–aspartate 139.

Belongs to the TRAFAC class translation factor GTPase superfamily. Classic translation factor GTPase family. LepA subfamily.

It is found in the cell membrane. The enzyme catalyses GTP + H2O = GDP + phosphate + H(+). In terms of biological role, required for accurate and efficient protein synthesis under certain stress conditions. May act as a fidelity factor of the translation reaction, by catalyzing a one-codon backward translocation of tRNAs on improperly translocated ribosomes. Back-translocation proceeds from a post-translocation (POST) complex to a pre-translocation (PRE) complex, thus giving elongation factor G a second chance to translocate the tRNAs correctly. Binds to ribosomes in a GTP-dependent manner. The sequence is that of Elongation factor 4 from Alkaliphilus metalliredigens (strain QYMF).